The chain runs to 1122 residues: Transcription-repair-coupling factor (1122 aa).

One can recognise a Helicase ATP-binding domain in the interval 593–758 (DLRNGMLMDR…MTGLKELSII (166 aa)). Residue 606–613 (GDVGFGKT) participates in ATP binding. The short motif at 711–714 (DEEQ) is the DEEQ box element. Positions 779–933 (IIRDALLREH…GFTIASRDMD (155 aa)) constitute a Helicase C-terminal domain.

It in the N-terminal section; belongs to the UvrB family. In the C-terminal section; belongs to the helicase family. RecG subfamily.

Its subcellular location is the cytoplasm. Functionally, couples transcription and DNA repair by recognizing RNA polymerase (RNAP) stalled at DNA lesions. Mediates ATP-dependent release of RNAP and its truncated transcript from the DNA, and recruitment of nucleotide excision repair machinery to the damaged site. The chain is Transcription-repair-coupling factor from Rickettsia conorii (strain ATCC VR-613 / Malish 7).